The sequence spans 420 residues: Vitellogenin-3 (420 aa).

The N-terminal stretch at 1–19 is a signal peptide; the sequence is MMSLRICLLATCLLVAAHA. Position 37 is a phosphothreonine (threonine 37). Phosphoserine occurs at positions 177 and 178. Sulfotyrosine occurs at positions 384 and 390. Residues 401 to 420 form a disordered region; that stretch reads GQRSPAHKQAAYHGMHHAQN.

Belongs to the AB hydrolase superfamily. Lipase family. In terms of processing, tyrosine sulfation occurs in the female only and plays an essential functional role. As to expression, synthesized in the fat body and ovarian follicle cells and accumulate in the oocyte.

It localises to the secreted. Functionally, vitellogenin is the major yolk protein of eggs where it is used as a food source during embryogenesis. Vitellogenins and their receptor yl/yolkless are required for maintenance of microtubule plus-end orientation towards the posterior pole of oocytes. Involved in polarized localization of germ plasm components, such as osk mRNA and vas protein, to the oocyte posterior cortex. Receptor-mediated endocytosis by yl/yolkless is crucial for actin reorganization, mediated by osk isoform A/Long, required to anchor germ plasm components to the oocyte cortex. The polypeptide is Vitellogenin-3 (Yp3) (Drosophila melanogaster (Fruit fly)).